The chain runs to 229 residues: Cytidylate kinase (229 aa).

An ATP-binding site is contributed by 12-20 (GPSGSGKGT).

The protein belongs to the cytidylate kinase family. Type 1 subfamily.

The protein resides in the cytoplasm. It carries out the reaction CMP + ATP = CDP + ADP. The catalysed reaction is dCMP + ATP = dCDP + ADP. The sequence is that of Cytidylate kinase from Stutzerimonas stutzeri (strain A1501) (Pseudomonas stutzeri).